Here is a 262-residue protein sequence, read N- to C-terminus: Trypsin theta (262 aa).

The first 19 residues, 1-19 (MHRLVVLLVCLAVGSACAG), serve as a signal peptide directing secretion. Residues 20 to 34 (TVGVSNGDPFEREGR) constitute a propeptide, activation peptide. One can recognise a Peptidase S1 domain in the interval 35–260 (IVGGEDTTIG…LRKWILNASE (226 aa)). A disulfide bridge connects residues Cys61 and Cys77. Residues His76 and Asp121 each act as charge relay system in the active site. 2 cysteine pairs are disulfide-bonded: Cys186-Cys203 and Cys212-Cys236. Ser216 serves as the catalytic Charge relay system.

This sequence belongs to the peptidase S1 family.

It is found in the secreted. It localises to the extracellular space. The catalysed reaction is Preferential cleavage: Arg-|-Xaa, Lys-|-Xaa.. This is Trypsin theta (thetaTry) from Drosophila melanogaster (Fruit fly).